We begin with the raw amino-acid sequence, 548 residues long: Chaperone Ric-8A (548 aa).

2 disordered regions span residues 443 to 484 (DPGH…EGMT) and 517 to 548 (GKMT…SDTN).

Belongs to the synembryn family.

The protein resides in the cytoplasm. It localises to the cell cortex. Functionally, chaperone that specifically binds and folds nascent G alpha proteins prior to G protein heterotrimer formation, promoting their stability and activity: folds GNAI1, GNAO1, GNA13 and GNAQ. Does not fold G(s) G-alpha proteins GNAS nor GNAL. Also acts as a guanine nucleotide exchange factor (GEF) for G alpha proteins by stimulating exchange of bound GDP for free GTP. The chain is Chaperone Ric-8A (ric8a) from Danio rerio (Zebrafish).